The sequence spans 258 residues: Undecaprenyl-diphosphatase (258 aa).

Helical transmembrane passes span 1-21 (MSII…FLPV), 42-62 (LKCF…FTFF), 71-91 (LWIK…LLYS), 96-116 (LFSQ…FIVV), 134-154 (GISY…MVPG), 173-193 (QTAA…ATFY), 211-231 (LFLL…KMFL), and 237-257 (FDYI…MFFV).

This sequence belongs to the UppP family.

It localises to the cell inner membrane. It catalyses the reaction di-trans,octa-cis-undecaprenyl diphosphate + H2O = di-trans,octa-cis-undecaprenyl phosphate + phosphate + H(+). Its function is as follows. Catalyzes the dephosphorylation of undecaprenyl diphosphate (UPP). Confers resistance to bacitracin. The protein is Undecaprenyl-diphosphatase of Campylobacter hominis (strain ATCC BAA-381 / DSM 21671 / CCUG 45161 / LMG 19568 / NCTC 13146 / CH001A).